Consider the following 183-residue polypeptide: Ribosome-recycling factor (183 aa).

Belongs to the RRF family.

It localises to the cytoplasm. Responsible for the release of ribosomes from messenger RNA at the termination of protein biosynthesis. May increase the efficiency of translation by recycling ribosomes from one round of translation to another. This is Ribosome-recycling factor from Mycoplasma mobile (strain ATCC 43663 / 163K / NCTC 11711) (Mesomycoplasma mobile).